The following is a 256-amino-acid chain: Rano class II histocompatibility antigen, B alpha chain (256 aa).

Residues 1–23 form the signal peptide; the sequence is MPLSRALILGVLALTTMLSPCGG. The segment at 24-111 is alpha-1; that stretch reads QDDIEADHVG…KRSNSTPAVN (88 aa). At 24 to 218 the chain is on the extracellular side; that stretch reads QDDIEADHVG…IPAPMSELTE (195 aa). The region spanning 108 to 206 is the Ig-like C1-type domain; the sequence is PAVNEVPEAT…LDEPVLRHWE (99 aa). Residues 112–205 form an alpha-2 region; that stretch reads EVPEATVFSK…SLDEPVLRHW (94 aa). A disulfide bridge links cysteine 134 with cysteine 190. Asparagine 145 carries an N-linked (GlcNAc...) asparagine glycan. Residues 206–218 form a connecting peptide region; that stretch reads EPEIPAPMSELTE. Residues 219 to 244 form a helical membrane-spanning segment; that stretch reads TVVCALGLSVGLVGIVVGTIFIIQGL. The Cytoplasmic segment spans residues 245–256; sequence RSVAPSRHPGPL.

The protein belongs to the MHC class II family.

The protein localises to the membrane. This chain is Rano class II histocompatibility antigen, B alpha chain (RT1-Ba), found in Rattus norvegicus (Rat).